A 134-amino-acid polypeptide reads, in one-letter code: Acyl carrier protein, mitochondrial (134 aa).

A mitochondrion-targeting transit peptide spans 1-46 (MFRTAALTAARVARPAVASAVRAGVARPAFVQAVPKVAAFQAVRFY). Positions 55 to 131 (DEVFSRIAQV…KAVEYILSQP (77 aa)) constitute a Carrier domain. S91 carries the post-translational modification O-(pantetheine 4'-phosphoryl)serine.

It belongs to the acyl carrier protein (ACP) family. As to quaternary structure, complex I is composed of about 30 different subunits. 4'-phosphopantetheine is transferred from CoA to a specific serine of apo-ACP by acpS. This modification is essential for activity because fatty acids are bound in thioester linkage to the sulfhydryl of the prosthetic group.

It localises to the mitochondrion. The protein operates within lipid metabolism; fatty acid biosynthesis. In terms of biological role, carrier of the growing fatty acid chain in fatty acid biosynthesis. May be involved in the synthesis of very-long-chain fatty acids. Accessory and non-catalytic subunit of the mitochondrial membrane respiratory chain NADH dehydrogenase (Complex I), which functions in the transfer of electrons from NADH to the respiratory chain. This Neurospora crassa (strain ATCC 24698 / 74-OR23-1A / CBS 708.71 / DSM 1257 / FGSC 987) protein is Acyl carrier protein, mitochondrial (nuo-12).